A 366-amino-acid chain; its full sequence is Mitogen-activated protein kinase 13 (366 aa).

In terms of domain architecture, Protein kinase spans 25 to 308; sequence YLAPAHVGSG…AAQALAHPFF (284 aa). ATP contacts are provided by residues 31–39 and Lys54; that span reads VGSGAYGAV. Asp150 (proton acceptor) is an active-site residue. Thr180 carries the phosphothreonine; by MAP2K3, MAP2K4, MAP2K6 and MAP2K7 modification. The short motif at 180 to 182 is the TXY element; that stretch reads TGY. Tyr182 is subject to Phosphotyrosine. Position 350 is a phosphoserine (Ser350).

The protein belongs to the protein kinase superfamily. CMGC Ser/Thr protein kinase family. MAP kinase subfamily. In terms of assembly, interacts with MAPK8IP2. Requires Mg(2+) as cofactor. In terms of processing, dually phosphorylated on Thr-180 and Tyr-182 by MAP2K3/MKK3, MAP2K4/MKK4, MAP2K6/MKK6 and MAP2K7/MKK7, which activates the enzyme. Dephosphorylated by dual specificity phosphatase DUSP1.

The catalysed reaction is L-seryl-[protein] + ATP = O-phospho-L-seryl-[protein] + ADP + H(+). It catalyses the reaction L-threonyl-[protein] + ATP = O-phospho-L-threonyl-[protein] + ADP + H(+). With respect to regulation, activated by phosphorylation on threonine and tyrosine by dual specificity kinases, MAP2K3/MKK3, MAP2K6/MKK6, MAP2K4/MKK4 and MAP2K7/MKK7. Activation by ultraviolet radiation, hyperosmotic shock, anisomycin or by TNF-alpha is mediated by MAP2K3/MKK3. Inhibited by dual specificity phosphatase DUSP1. Functionally, serine/threonine kinase which acts as an essential component of the MAP kinase signal transduction pathway. MAPK13 is one of the four p38 MAPKs which play an important role in the cascades of cellular responses evoked by extracellular stimuli such as pro-inflammatory cytokines or physical stress leading to direct activation of transcription factors such as ELK1 and ATF2. Accordingly, p38 MAPKs phosphorylate a broad range of proteins and it has been estimated that they may have approximately 200 to 300 substrates each. MAPK13 is one of the less studied p38 MAPK isoforms. Some of the targets are downstream kinases such as MAPKAPK2, which are activated through phosphorylation and further phosphorylate additional targets. Plays a role in the regulation of protein translation by phosphorylating and inactivating EEF2K. Involved in cytoskeletal remodeling through phosphorylation of MAPT and STMN1. Mediates UV irradiation induced up-regulation of the gene expression of CXCL14. Plays an important role in the regulation of epidermal keratinocyte differentiation, apoptosis and skin tumor development. Phosphorylates the transcriptional activator MYB in response to stress which leads to rapid MYB degradation via a proteasome-dependent pathway. MAPK13 also phosphorylates and down-regulates PRKD1 during regulation of insulin secretion in pancreatic beta cells. The sequence is that of Mitogen-activated protein kinase 13 (Mapk13) from Mus musculus (Mouse).